The sequence spans 622 residues: Polyamine transporter 3 (622 aa).

The span at 1 to 47 shows a compositional bias: polar residues; that stretch reads MNRQESINSFNSDETSSLSDVESQQPQQYIPSESGSKSNMAPNQLKL. The interval 1 to 76 is disordered; that stretch reads MNRQESINSF…VPDVNAPQSS (76 aa). Over 1–182 the chain is Cytoplasmic; it reads MNRQESINSF…WPAWIRWSYT (182 aa). The residue at position 55 (Ser-55) is a Phosphoserine. Position 98 is a phosphothreonine (Thr-98). Phosphoserine occurs at positions 101 and 132. Residues 105–152 form a disordered region; that stretch reads TSTAISRTRTRQIDGASSPSSNEDALESDNNEKGKEGDSSGANDEAPD. The chain crosses the membrane as a helical span at residues 183-203; the sequence is VLLSILVICVAYGSACISGGL. The Extracellular portion of the chain corresponds to 204–215; that stretch reads GTVEKKYHVGME. A helical transmembrane segment spans residues 216-236; sequence AAILSVSLMVIGFSLGPLIWS. At 237–245 the chain is on the cytoplasmic side; it reads PVSDLYGRR. Residues 246–266 traverse the membrane as a helical segment; the sequence is VAYFVSMGLYVIFNIPCALAP. Over 267 to 275 the chain is Extracellular; sequence NLGSLLACR. A helical transmembrane segment spans residues 276–296; that stretch reads FLCGVWSSSGLCLVGGSIADM. At 297–305 the chain is on the cytoplasmic side; it reads FPSETRGKA. The helical transmembrane segment at 306–326 threads the bilayer; the sequence is IAFFAFAPYVGPVVGPLVNGF. Over 327-335 the chain is Extracellular; it reads ISVSTGRMD. The chain crosses the membrane as a helical span at residues 336-356; that stretch reads LIFWVNMAFAGVMWIISSAIP. Residues 357–416 are Cytoplasmic-facing; that stretch reads ETYAPVILKRKAARLRKETGNPKIMTEQEAQGVSMGEMMRACLLRPLYFSVTEPVLVATC. A helical membrane pass occupies residues 417–437; it reads FYVCLIYSLLYAFFFAFPVIF. Over 438 to 446 the chain is Extracellular; sequence GELYGYKDN. Residues 447–467 traverse the membrane as a helical segment; the sequence is LVGLMFIPIVIGALWALATTF. Residues 468–487 lie on the Cytoplasmic side of the membrane; that stretch reads YCENKYLQIVKQRKPTPEDR. A helical transmembrane segment spans residues 488 to 508; that stretch reads LLGAKIGAPFAAIALWILGAT. Topologically, residues 509-512 are extracellular; sequence AYKH. The chain crosses the membrane as a helical span at residues 513–533; it reads IIWVGPASAGLAFGFGMVLIY. The Cytoplasmic portion of the chain corresponds to 534-550; sequence YSLNNYIIDCYVQYASS. Residues 551 to 571 traverse the membrane as a helical segment; sequence ALATKVFLRSAGGAAFPLFTI. Over 572–583 the chain is Extracellular; that stretch reads QMYHKLNLHWGS. The helical transmembrane segment at 584-604 threads the bilayer; the sequence is WLLAFISTAMIALPFAFSYWG. The Cytoplasmic segment spans residues 605–622; that stretch reads KGLRHKLSKKDYSIDSIE.

This sequence belongs to the major facilitator superfamily. DHA1 family. Polyamines/proton antiporter (TC 2.A.1.2.16) subfamily.

Its subcellular location is the cell membrane. Cell membrane polyamine/proton antiporter, involved in the detoxification of excess polyamines in the cytoplasm. Recognizes spermine, but not spermidine. The polypeptide is Polyamine transporter 3 (TPO3) (Saccharomyces cerevisiae (strain ATCC 204508 / S288c) (Baker's yeast)).